A 122-amino-acid chain; its full sequence is Small ribosomal subunit protein uS13c (122 aa).

Belongs to the universal ribosomal protein uS13 family. Part of the 30S ribosomal subunit.

It is found in the plastid. The protein localises to the chloroplast. Its function is as follows. Located at the top of the head of the 30S subunit, it contacts several helices of the 16S rRNA. In Cyanidium caldarium (Red alga), this protein is Small ribosomal subunit protein uS13c.